We begin with the raw amino-acid sequence, 100 residues long: Small ribosomal subunit protein uS14 (100 aa).

Belongs to the universal ribosomal protein uS14 family. Part of the 30S ribosomal subunit. Contacts proteins S3 and S10.

Binds 16S rRNA, required for the assembly of 30S particles and may also be responsible for determining the conformation of the 16S rRNA at the A site. The protein is Small ribosomal subunit protein uS14 of Synechocystis sp. (strain ATCC 27184 / PCC 6803 / Kazusa).